The following is a 119-amino-acid chain: Protein YdaY (119 aa).

The protein is Protein YdaY (ydaY) of Escherichia coli (strain K12).